Reading from the N-terminus, the 194-residue chain is Flagellar transcriptional regulator FlhC (194 aa).

Zn(2+) is bound by residues Cys-139, Cys-142, Cys-159, and Cys-162.

It belongs to the FlhC family. In terms of assembly, heterohexamer composed of two FlhC and four FlhD subunits. Each FlhC binds a FlhD dimer, forming a heterotrimer, and a hexamer assembles by dimerization of two heterotrimers. Zn(2+) serves as cofactor.

The protein localises to the cytoplasm. Functions in complex with FlhD as a master transcriptional regulator that regulates transcription of several flagellar and non-flagellar operons by binding to their promoter region. Activates expression of class 2 flagellar genes, including fliA, which is a flagellum-specific sigma factor that turns on the class 3 genes. Also regulates genes whose products function in a variety of physiological pathways. The sequence is that of Flagellar transcriptional regulator FlhC from Xenorhabdus nematophila (Achromobacter nematophilus).